Consider the following 30-residue polypeptide: Acidic phospholipase A2 homolog cannitoxin gamma chain (30 aa).

As to quaternary structure, heterotrimer of alpha, beta, and gamma chains; non-covalently linked. Post-translationally, glycosylated. In terms of tissue distribution, expressed by the venom gland.

It is found in the secreted. In terms of biological role, heterotrimer: Snake venom phospholipase A2 (PLA2) heterotrimer that acts as a potent presynaptic neurotoxin by blocking synaptic transmission and synaptic vesicle recycling. Enzymatic activity is essential for the neurotoxic effects. May act by binding in a calcium-dependent fashion to neurotonal pentraxin-1 (NPTX1) and neurotonal pentraxin-2 (NPTX2), but not to neuronal pentraxin receptor (NPTXR). Also binds to taipoxin-associated calcium binding protein 49 (RCN2), a protein localized in the lumen of endoplasmic reticulum. Its function is as follows. Monomer (gamma chain): Snake venom phospholipase A2 homolog that is neither toxic nor enzymatically active. Does not bind calcium. The sequence is that of Acidic phospholipase A2 homolog cannitoxin gamma chain from Oxyuranus scutellatus canni (Papuan taipan).